The primary structure comprises 445 residues: Chromosomal replication initiator protein DnaA (445 aa).

Positions 1 to 71 (MEEVWLQAQS…SVQSLTDSQT (71 aa)) are domain I, interacts with DnaA modulators. The tract at residues 71-108 (TKIELLIAKPKTEKPKQPAASEVTAAEPEACSGPDHST) is domain II. Residues 83 to 106 (EKPKQPAASEVTAAEPEACSGPDH) are disordered. Residues 109 to 325 (NLNPKYTFDT…GMLIRLGAVS (217 aa)) form a domain III, AAA+ region region. ATP contacts are provided by G153, G155, K156, and T157. The tract at residues 326 to 445 (SLTGKNITLD…VDTLRKGLLS (120 aa)) is domain IV, binds dsDNA.

The protein belongs to the DnaA family. Oligomerizes as a right-handed, spiral filament on DNA at oriC.

The protein localises to the cytoplasm. In terms of biological role, plays an essential role in the initiation and regulation of chromosomal replication. ATP-DnaA binds to the origin of replication (oriC) to initiate formation of the DNA replication initiation complex once per cell cycle. Binds the DnaA box (a 9 base pair repeat at the origin) and separates the double-stranded (ds)DNA. Forms a right-handed helical filament on oriC DNA; dsDNA binds to the exterior of the filament while single-stranded (ss)DNA is stabiized in the filament's interior. The ATP-DnaA-oriC complex binds and stabilizes one strand of the AT-rich DNA unwinding element (DUE), permitting loading of DNA polymerase. After initiation quickly degrades to an ADP-DnaA complex that is not apt for DNA replication. Binds acidic phospholipids. This Geobacter sulfurreducens (strain ATCC 51573 / DSM 12127 / PCA) protein is Chromosomal replication initiator protein DnaA.